A 460-amino-acid chain; its full sequence is MPLSATADTSKTVKLERYNSYLRKIHSTKVLNASSKVLFRATLLVALVLVLIFAINYPPLSDSRAAAAHHLHRRSFLSTGLFSSSSSSSSIGGAAWEKRVRQSSTAKRPHGLSVLVTGAAGFVGSHCSLALRKRGDGVLGFDNFNDYYDPSLKRARQELLEKQQVFIVEGDLNDGPLLRKLFDVVPFTHILHLAAQAGVRYAMKNPQSYIASNIAGFVNLLEVAKAANPQPAIVWASSSSVYGLNTENPFSEEHRTDQPASLYAATKKAGEEIAHTYNHIYGLSLTGLRFFTVYGPWGRPDMAYFFFTKDILHGKSIDIYRTQDNQEVARDFTYIDDIVKGCVGALDTAEKSTGSGGKKRGQAQLRVYNLGNTSPVPVGRLVSILEGLLGTKAKKHLIKMPRNGDVPYTHANVSLAYKDFGYKPTTDLAAGLRKFVKWYVGYYGIQPRVKKETSHAEDSA.

Helical transmembrane passes span 41-61 (ATLLVALVLVLIFAINYPPLS) and 111-131 (GLSVLVTGAAGFVGSHCSLAL). Position 113–144 (113–144 (SVLVTGAAGFVGSHCSLALRKRGDGVLGFDNF)) interacts with NAD(+). Residue Tyr-263 is the Proton acceptor of the active site.

Belongs to the NAD(P)-dependent epimerase/dehydratase family. In terms of assembly, homodimer. In roots, leaf veins, siliques, flowers, pollen and stems.

It localises to the golgi apparatus. Its subcellular location is the golgi stack membrane. It catalyses the reaction UDP-alpha-D-glucuronate = UDP-alpha-D-galacturonate. In terms of biological role, involved in the synthesis of the negatively charged monosaccharide that forms the backbone of pectic cell wall components. The polypeptide is UDP-glucuronate 4-epimerase 6 (GAE6) (Arabidopsis thaliana (Mouse-ear cress)).